We begin with the raw amino-acid sequence, 88 residues long: UPF0297 protein SSU98_0066 (88 aa).

This sequence belongs to the UPF0297 family.

The polypeptide is UPF0297 protein SSU98_0066 (Streptococcus suis (strain 98HAH33)).